The chain runs to 279 residues: tRNA (guanine-N(1)-)-methyltransferase (279 aa).

Residues Gly-132 and 152-157 (IGDYVL) contribute to the S-adenosyl-L-methionine site.

This sequence belongs to the RNA methyltransferase TrmD family. In terms of assembly, homodimer.

Its subcellular location is the cytoplasm. It catalyses the reaction guanosine(37) in tRNA + S-adenosyl-L-methionine = N(1)-methylguanosine(37) in tRNA + S-adenosyl-L-homocysteine + H(+). Functionally, specifically methylates guanosine-37 in various tRNAs. This is tRNA (guanine-N(1)-)-methyltransferase from Saccharophagus degradans (strain 2-40 / ATCC 43961 / DSM 17024).